The chain runs to 433 residues: Trigger factor (433 aa).

Residues 161–246 (EDRVVIDFVG…LKKVENIVLP (86 aa)) enclose the PPIase FKBP-type domain.

The protein belongs to the FKBP-type PPIase family. Tig subfamily.

It is found in the cytoplasm. It carries out the reaction [protein]-peptidylproline (omega=180) = [protein]-peptidylproline (omega=0). Involved in protein export. Acts as a chaperone by maintaining the newly synthesized protein in an open conformation. Functions as a peptidyl-prolyl cis-trans isomerase. The sequence is that of Trigger factor from Actinobacillus pleuropneumoniae serotype 5b (strain L20).